A 514-amino-acid chain; its full sequence is Membrane-bound lytic murein transglycosylase F (514 aa).

Residues 1 to 30 form the signal peptide; that stretch reads MKKLKINYLFIGILTLLLAAALWPSIPWFG. The tract at residues 31 to 269 is non-LT domain; sequence KTENHIAAIQ…RIEEKYLGHG (239 aa). Positions 270 to 514 are LT domain; it reads DDFDYVDTRS…LFTPQKKEEK (245 aa). The active site involves Glu-314.

This sequence in the N-terminal section; belongs to the bacterial solute-binding protein 3 family. In the C-terminal section; belongs to the transglycosylase Slt family.

It is found in the cell outer membrane. It catalyses the reaction Exolytic cleavage of the (1-&gt;4)-beta-glycosidic linkage between N-acetylmuramic acid (MurNAc) and N-acetylglucosamine (GlcNAc) residues in peptidoglycan, from either the reducing or the non-reducing ends of the peptidoglycan chains, with concomitant formation of a 1,6-anhydrobond in the MurNAc residue.. Murein-degrading enzyme that degrades murein glycan strands and insoluble, high-molecular weight murein sacculi, with the concomitant formation of a 1,6-anhydromuramoyl product. Lytic transglycosylases (LTs) play an integral role in the metabolism of the peptidoglycan (PG) sacculus. Their lytic action creates space within the PG sacculus to allow for its expansion as well as for the insertion of various structures such as secretion systems and flagella. This chain is Membrane-bound lytic murein transglycosylase F, found in Salmonella typhimurium (strain LT2 / SGSC1412 / ATCC 700720).